The primary structure comprises 248 residues: MSKRIKCTLSYDGTHFFGYQIQPGKRTVQGELERVLEQMHKGKAIRVTASGRTDAGVHAYGQVIHFDTFLSLSPDQWKKALNAQLPDDIVIKDVQEADPSFHARFSAKAKEYRYKVRIAQERDVFLRNYCYHYPYPLDMEAMRHALRLIEGTHDFTSFCSAKTDVDDRVRTIYKADMAMHDDLLEFCFIGNGFLYNMVRIIVGTILEVGQGKRSIDSISHAFEAKDRQFAGKTAPPQGLYLWKVYYDN.

The active-site Nucleophile is aspartate 54. Tyrosine 112 lines the substrate pocket.

It belongs to the tRNA pseudouridine synthase TruA family. In terms of assembly, homodimer.

The catalysed reaction is uridine(38/39/40) in tRNA = pseudouridine(38/39/40) in tRNA. In terms of biological role, formation of pseudouridine at positions 38, 39 and 40 in the anticodon stem and loop of transfer RNAs. This is tRNA pseudouridine synthase A from Geobacillus sp. (strain WCH70).